Here is a 500-residue protein sequence, read N- to C-terminus: Allene oxide synthase 3 (500 aa).

The tract at residues 1–26 (MAPPPVNSGDAAAAATGEKSKLSPSG) is disordered. Substrate-binding positions include 297–298 (FN), Lys-304, and 365–368 (PVEF). Cys-452 contacts heme.

Belongs to the cytochrome P450 family. Heme serves as cofactor. Not expressed in dark-grown seedlings.

It catalyses the reaction (13S)-hydroperoxy-(9Z,11E,15Z)-octadecatrienoate = (9Z,13S,15Z)-12,13-epoxyoctadeca-9,11,15-trienoate + H2O. It participates in lipid metabolism; oxylipin biosynthesis. In terms of biological role, involved in the biosynthesis of jasmonic acid, a growth regulator that is implicated also as a signaling molecule in plant defense. Converts 13-hydroperoxylinolenic acid to 12,13-epoxylinolenic acid. The chain is Allene oxide synthase 3 (CYP74A3) from Oryza sativa subsp. japonica (Rice).